The sequence spans 76 residues: Paralithocin 3 (76 aa).

The signal sequence occupies residues 1–23 (MGPMKVLLVMLVVMVAAPHIADA). 4 cysteine pairs are disulfide-bonded: Cys-31–Cys-62, Cys-40–Cys-58, Cys-44–Cys-56, and Cys-49–Cys-59. Pro-74 is subject to Proline amide; partial.

The protein belongs to the paralithocin family. In terms of processing, the amidated form is probably the active form.

Has antibacterial activity, mainly against marine Gram-positive bacteria like C.maltaromaticum (MIC=25 uM), C.mobile (MIC=12.5 uM), C.divergens (MIC=25 uM) and C.funditum (MIC=12.5 uM) but also against C.glutamicum (MIC=12.5 uM). Has very little or no activity against Gram-negative bacteria. This chain is Paralithocin 3, found in Paralithodes camtschaticus (Red king crab).